The sequence spans 318 residues: Methionyl-tRNA formyltransferase (318 aa).

110 to 113 (SLLP) serves as a coordination point for (6S)-5,6,7,8-tetrahydrofolate.

It belongs to the Fmt family.

The enzyme catalyses L-methionyl-tRNA(fMet) + (6R)-10-formyltetrahydrofolate = N-formyl-L-methionyl-tRNA(fMet) + (6S)-5,6,7,8-tetrahydrofolate + H(+). Attaches a formyl group to the free amino group of methionyl-tRNA(fMet). The formyl group appears to play a dual role in the initiator identity of N-formylmethionyl-tRNA by promoting its recognition by IF2 and preventing the misappropriation of this tRNA by the elongation apparatus. The protein is Methionyl-tRNA formyltransferase of Latilactobacillus sakei subsp. sakei (strain 23K) (Lactobacillus sakei subsp. sakei).